A 377-amino-acid polypeptide reads, in one-letter code: Alanine racemase (377 aa).

Lys35 functions as the Proton acceptor; specific for D-alanine in the catalytic mechanism. Lys35 carries the N6-(pyridoxal phosphate)lysine modification. Substrate is bound at residue Arg130. The active-site Proton acceptor; specific for L-alanine is the Tyr260. Met312 is a substrate binding site.

This sequence belongs to the alanine racemase family. Pyridoxal 5'-phosphate serves as cofactor.

It carries out the reaction L-alanine = D-alanine. It functions in the pathway amino-acid biosynthesis; D-alanine biosynthesis; D-alanine from L-alanine: step 1/1. Its function is as follows. Catalyzes the interconversion of L-alanine and D-alanine. May also act on other amino acids. In Leptothrix cholodnii (strain ATCC 51168 / LMG 8142 / SP-6) (Leptothrix discophora (strain SP-6)), this protein is Alanine racemase (alr).